Consider the following 290-residue polypeptide: 4-hydroxy-tetrahydrodipicolinate synthase (290 aa).

Thr44 lines the pyruvate pocket. Tyr132 acts as the Proton donor/acceptor in catalysis. The Schiff-base intermediate with substrate role is filled by Lys160. Ile202 contacts pyruvate.

The protein belongs to the DapA family. As to quaternary structure, homotetramer; dimer of dimers.

It localises to the cytoplasm. It catalyses the reaction L-aspartate 4-semialdehyde + pyruvate = (2S,4S)-4-hydroxy-2,3,4,5-tetrahydrodipicolinate + H2O + H(+). The protein operates within amino-acid biosynthesis; L-lysine biosynthesis via DAP pathway; (S)-tetrahydrodipicolinate from L-aspartate: step 3/4. Functionally, catalyzes the condensation of (S)-aspartate-beta-semialdehyde [(S)-ASA] and pyruvate to 4-hydroxy-tetrahydrodipicolinate (HTPA). The sequence is that of 4-hydroxy-tetrahydrodipicolinate synthase from Trichlorobacter lovleyi (strain ATCC BAA-1151 / DSM 17278 / SZ) (Geobacter lovleyi).